The sequence spans 657 residues: Pentatricopeptide repeat-containing protein At2g37310 (657 aa).

PPR repeat units lie at residues 21–55, 56–86, 87–121, 128–165, 166–196, 197–232, 233–267, 268–298, 299–333, 334–364, 365–399, 400–430, 431–465, 466–501, and 502–536; these read DGGA…SIKP, DNFL…ITVR, NAFS…SCYS, DSIS…GFDS, DVFV…MSER, DVVS…DFKP, NGVT…HIQM, DLSL…MSEK, DSVT…GLST, WNAM…GSRP, NTVT…GADN, NIYV…CKDR, SLIA…GTKP, DDVT…DIEP, and GVEH…PIAK. Residues 537–612 form a type E motif region; the sequence is VWGALLNGAS…IPGTSWIETE (76 aa). Residues 613–643 are type E(+) motif; the sequence is KGLRSFIAKDSSCERSKEMYEIIEGLVESMS.

It belongs to the PPR family. PCMP-E subfamily.

This is Pentatricopeptide repeat-containing protein At2g37310 (PCMP-E49) from Arabidopsis thaliana (Mouse-ear cress).